Consider the following 264-residue polypeptide: ATP synthase subunit a (264 aa).

Helical transmembrane passes span T29 to F49, I90 to I110, D134 to I154, I177 to L197, L208 to V228, and L235 to V255.

Belongs to the ATPase A chain family. F-type ATPases have 2 components, CF(1) - the catalytic core - and CF(0) - the membrane proton channel. CF(1) has five subunits: alpha(3), beta(3), gamma(1), delta(1), epsilon(1). CF(0) has three main subunits: a(1), b(2) and c(9-12). The alpha and beta chains form an alternating ring which encloses part of the gamma chain. CF(1) is attached to CF(0) by a central stalk formed by the gamma and epsilon chains, while a peripheral stalk is formed by the delta and b chains.

It is found in the cell inner membrane. Key component of the proton channel; it plays a direct role in the translocation of protons across the membrane. This Shewanella baltica (strain OS223) protein is ATP synthase subunit a.